An 857-amino-acid polypeptide reads, in one-letter code: MGNANTKESRGDDSGRRGLHSALDAGIGSSTQSGRESSRRNRNTRHDLTGLLGRAAGGSSSHADERHERKETKQEREARRLEKERVARLQERERSMKEEHVDGGYLVTMGTYVGPEDFNKQIVRQLMIERKLAPFWRGLNDFDENWTEPQIIAAARGLPIPAAGETPPDELIPRPRSPASPTDASSNTNHLTVPIGGRSLSTASEHSTSNAGSALPSPGSGKGSSSPFKPTRGKAIAAVLGGGSCRNGSSTEIAPREIMLPNDPFVNGQPLEVFLYKNATECPICFLTYPPYLNHTRCCDQPICSECFVQIKRPDPHFPEGHNENDPNNNPEESAGLLVSEPACCPYCTQPDFGVTYEPPPFRRGLTYAISPLALGSTSAAMSSESSVNSGSLSPGVASPGGRRRNQSLSANAPNVVLTDKVRPEWATKLQAARAHLARRAAAATALHTAAFLMNNNESRALRSRFGRRNTGGSGSASATPGNGDENRGTGPATPANAGATANTDRAAGSSGNGNRRSRLEDLEEMMFAEAIRLSLAAEEERKKKAEKEEQKEAKKREKEREKAEKKAEKAAAKAAAKQGGPYEASRSGHSSASGSSLSLPGLSFGRKRGNSAASNLRVEASVASAMASTGAAMTTPAAPGALAPDSSTKDKGKAVDRSAGAASNDASARPIPSPQPMAGPSHLRQMSSASSASSSAVESNQGSYVPPSNLQDPRGSGLSLGGRSGVSEDGDEQDRDPSTSTEPMFNFRSLAEVVGVSIEGEHAGKRLSQINADGQAIEGEDETAKSGEGAGEHVEHVLDSQTTGISEQDSEINSQPPRLTVTLDSPATSVGDVSTASDSKHVGNETTVEHATQVTL.

6 disordered regions span residues 1–81, 157–231, 384–416, 466–517, 545–747, and 763–857; these read MGNA…ARRL, GLPI…FKPT, SESS…APNV, FGRR…GNRR, KAEK…PMFN, and HAGK…QVTL. Basic and acidic residues-rich tracts occupy residues 7 to 16 and 36 to 48; these read KESRGDDSGR and ESSR…RHDL. Positions 49–61 are enriched in low complexity; it reads TGLLGRAAGGSSS. The segment covering 62–81 has biased composition (basic and acidic residues); sequence HADERHERKETKQEREARRL. Polar residues-rich tracts occupy residues 179 to 191 and 199 to 208; these read ASPT…TNHL and SLSTASEHST. Composition is skewed to low complexity over residues 209 to 230, 384 to 394, and 476 to 504; these read SNAG…PFKP, SESSVNSGSLS, and SASA…TANT. Residues 545 to 572 show a composition bias toward basic and acidic residues; sequence KAEKEEQKEAKKREKEREKAEKKAEKAA. 2 stretches are compositionally biased toward low complexity: residues 586–604 and 621–645; these read SRSG…PGLS and ASVA…ALAP. Residues 648–657 show a composition bias toward basic and acidic residues; sequence STKDKGKAVD. Residues 688-697 show a composition bias toward low complexity; the sequence is SSASSASSSA. The span at 698-712 shows a compositional bias: polar residues; it reads VESNQGSYVPPSNLQ. The segment covering 783–799 has biased composition (basic and acidic residues); it reads ETAKSGEGAGEHVEHVL. Polar residues-rich tracts occupy residues 800–838 and 845–857; these read DSQT…STAS and NETT…QVTL.

This sequence belongs to the SIP5 family.

Its subcellular location is the cytoplasm. May negatively regulate the snf-1 kinase. This Neurospora crassa (strain ATCC 24698 / 74-OR23-1A / CBS 708.71 / DSM 1257 / FGSC 987) protein is Protein sip-5 (sip-5).